A 377-amino-acid polypeptide reads, in one-letter code: MALNPEDLGSGFRHSKVSMFINEQMAKHDKGPDFYLENLSLSWEEVEDKFKVILEDSEVSNEAREACAWGTLALGVRFAHRQGCLQGHGVQWLQDLSSLHKMSALSLSPDLKQLIHQQEMAQKEVALQLQMAQAKLEEVQRERDLLRLKILQAELRALPNAVRPAVAIPPAVVRRGGIRTQWSSTKENLAEWMAAATGRPNERANMSDTALSGTITSPEEVLEDPNGSFMKLLGVMKCKNYPLKRQRLDLRPKKASMCSFSQSLNLRSTVSSEPFIVQLPASFTYSYESPFPAIPTTSQLPTTERQPHVYPYSMASDISHLSDMRIHRGDHQELPKDKRFSAFRRPGDWDCPWCKAVNFSRRENCFHCGKGIWLQNP.

A required for repression of transcription region spans residues 92–377; that stretch reads WLQDLSSLHK…CGKGIWLQNP (286 aa). A coiled-coil region spans residues 122 to 156; the sequence is QKEVALQLQMAQAKLEEVQRERDLLRLKILQAELR. The stretch at 142-165 is one LRR repeat; the sequence is ERDLLRLKILQAELRALPNAVRPA. The RanBP2-type zinc-finger motif lies at 345-369; that stretch reads RPGDWDCPWCKAVNFSRRENCFHCG. 4 residues coordinate Zn(2+): C351, C354, C365, and C368.

Belongs to the TEX13 family. Interacts with CNOT1; the interaction may inhibit CNOT1 binding to mRNA and subsequently CNOT1-mediated mRNA degradation.

Its function is as follows. Binds to ssRNA containing the consensus sequence 5'-AGGUAA-3'. Plays a role in transcriptional repression. Required for rapid sperm motility and timely degradation of mRNA via its interaction with CNOT1. This Mus musculus (Mouse) protein is Testis-expressed protein 13A.